We begin with the raw amino-acid sequence, 187 residues long: Large ribosomal subunit protein uL22 (187 aa).

The segment at 155-187 is disordered; it reads DAVSRAAPTDDAPAKKKLSKKKLARQKEKMMRE. Residues 169-178 are compositionally biased toward basic residues; the sequence is KKKLSKKKLA.

The protein belongs to the universal ribosomal protein uL22 family.

This Lonomia obliqua (Moth) protein is Large ribosomal subunit protein uL22 (RpL17).